The following is a 993-amino-acid chain: Structural polyprotein (993 aa).

An a divalent metal cation-binding site is contributed by Asp-11. One can recognise a Peptidase S50 domain in the interval 494-736 (ADKGYEVVAN…AGRQYHLAMA (243 aa)). Ser-633 acts as the Nucleophile in catalysis. Lys-673 is a catalytic residue. Residues 950-993 (AMEMKHRNPRRALPKPKPKPNAPTQRPPGRLGRWIRTVSDEDLE) are disordered. A compositionally biased stretch (basic residues) spans 956-967 (RNPRRALPKPKP). The interaction with VP1 protein stretch occupies residues 984 to 993 (IRTVSDEDLE).

In terms of assembly, homotrimer. A central divalent metal stabilizes the VP2 trimer. Interacts with host ITGA4/ITGB1. Homodimer. Interacts (via C-terminus) with VP1 in the cytoplasm. Interacts with VP2. In terms of processing, specific enzymatic cleavages yield mature proteins. The capsid assembly seems to be regulated by polyprotein processing. The protease VP4 cleaves itself off the polyprotein, thus releasing pre-VP2 and VP3 within the infected cell. During capsid assembly, the C-terminus of pre-VP2 is further processed by VP4, giving rise to VP2, the external capsid protein and three small peptides that all stay closely associated with the capsid.

The protein resides in the virion. Its subcellular location is the host cytoplasm. Functionally, capsid protein VP2 self assembles to form an icosahedral capsid with a T=13 symmetry, about 70 nm in diameter, and consisting of 260 VP2 trimers. The capsid encapsulates the genomic dsRNA. VP2 is also involved in attachment and entry into the host cell by interacting with host ITGA4/ITGB1. The precursor of VP2 plays an important role in capsid assembly. First, pre-VP2 and VP2 oligomers assemble to form a procapsid. Then, the pre-VP2 intermediates may be processed into VP2 proteins by proteolytic cleavage mediated by VP4 to obtain the mature virion. The final capsid is composed of pentamers and hexamers but VP2 has a natural tendency to assemble into all-pentameric structures. Therefore pre-VP2 may be required to allow formation of the hexameric structures. Its function is as follows. Protease VP4 is a serine protease that cleaves the polyprotein into its final products. Pre-VP2 is first partially cleaved, and may be completely processed by VP4 upon capsid maturation. In terms of biological role, capsid protein VP3 plays a key role in virion assembly by providing a scaffold for the capsid made of VP2. May self-assemble to form a T=4-like icosahedral inner-capsid composed of at least 180 trimers. Plays a role in genomic RNA packaging by recruiting VP1 into the capsid and interacting with the dsRNA genome segments to form a ribonucleoprotein complex. Additionally, the interaction of the VP3 C-terminal tail with VP1 removes the inherent structural blockade of the polymerase active site. Thus, VP3 can also function as a transcriptional activator. Functionally, structural peptide 1 is a small peptide derived from pre-VP2 C-terminus. It destabilizes and perforates cell membranes, suggesting a role during entry. Structural peptide 2 is a small peptide derived from pVP2 C-terminus. It is not essential for the virus viability, but viral growth is affected when missing. Its function is as follows. Structural peptide 3 is a small peptide derived from pVP2 C-terminus. It is not essential for the virus viability, but viral growth is affected when missing. In terms of biological role, structural peptide 4 is a small peptide derived from pVP2 C-terminus. It is essential for the virus viability. This chain is Structural polyprotein, found in Avian infectious bursal disease virus (strain PBG-98) (IBDV).